The primary structure comprises 977 residues: Probable RNA-dependent RNA polymerase 5 (977 aa).

Residues 103 to 122 (EEMSVDSDAPSPKSLKSEDK) form a disordered region.

Belongs to the RdRP family.

It carries out the reaction RNA(n) + a ribonucleoside 5'-triphosphate = RNA(n+1) + diphosphate. Probably involved in the RNA silencing pathway and required for the generation of small interfering RNAs (siRNAs). This chain is Probable RNA-dependent RNA polymerase 5 (RDR5), found in Arabidopsis thaliana (Mouse-ear cress).